Consider the following 188-residue polypeptide: Protein SSX5 (188 aa).

The KRAB-related domain occupies 20–83; the sequence is KMQKAFDDIA…KRVADFQGND (64 aa). The tract at residues 78 to 188 is disordered; sequence DFQGNDFDND…EISDPQEDDE (111 aa). Residues 112-122 are compositionally biased toward basic and acidic residues; the sequence is TPEKPAEEGND. Over residues 144-155 the composition is skewed to polar residues; it reads KLNTSEKVNKTS. The segment covering 156–170 has biased composition (basic residues); sequence GPKRGKHAWTHRVRE. Residues 179–188 are compositionally biased toward acidic residues; it reads EISDPQEDDE.

The protein belongs to the SSX family.

Functionally, could act as a modulator of transcription. The sequence is that of Protein SSX5 (SSX5) from Homo sapiens (Human).